The sequence spans 369 residues: Ferredoxin--NADP reductase, chloroplastic (369 aa).

The N-terminal 55 residues, 1 to 55 (MTTAVTAAVSFPSTKTTSLSARSSSVISPDKISYKKVPLYYRNVSATGKMGPIRA), are a transit peptide targeting the chloroplast. One can recognise an FAD-binding FR-type domain in the interval 90–212 (KTPYVGRCLL…TGPVGKEMLM (123 aa)). Residues 148 to 151 (RLYS), 169 to 171 (CVK), Y175, 186 to 188 (VCS), and T227 contribute to the FAD site. Residues S151 and K171 each contribute to the NADP(+) site. NADP(+) contacts are provided by residues T227, 259-260 (VP), 289-290 (SR), 299-301 (KMY), 328-329 (GL), and E367.

The protein belongs to the ferredoxin--NADP reductase type 1 family. FAD serves as cofactor.

It is found in the plastid. Its subcellular location is the chloroplast stroma. The protein localises to the chloroplast thylakoid membrane. The enzyme catalyses 2 reduced [2Fe-2S]-[ferredoxin] + NADP(+) + H(+) = 2 oxidized [2Fe-2S]-[ferredoxin] + NADPH. It participates in energy metabolism; photosynthesis. May play a key role in regulating the relative amounts of cyclic and non-cyclic electron flow to meet the demands of the plant for ATP and reducing power. This is Ferredoxin--NADP reductase, chloroplastic (PETH) from Spinacia oleracea (Spinach).